The following is a 194-amino-acid chain: Peptidyl-tRNA hydrolase (194 aa).

Tyr-16 serves as a coordination point for tRNA. His-21 serves as the catalytic Proton acceptor. Phe-67, Asn-69, and Asn-115 together coordinate tRNA.

The protein belongs to the PTH family. In terms of assembly, monomer.

The protein resides in the cytoplasm. It catalyses the reaction an N-acyl-L-alpha-aminoacyl-tRNA + H2O = an N-acyl-L-amino acid + a tRNA + H(+). Functionally, hydrolyzes ribosome-free peptidyl-tRNAs (with 1 or more amino acids incorporated), which drop off the ribosome during protein synthesis, or as a result of ribosome stalling. Its function is as follows. Catalyzes the release of premature peptidyl moieties from peptidyl-tRNA molecules trapped in stalled 50S ribosomal subunits, and thus maintains levels of free tRNAs and 50S ribosomes. The protein is Peptidyl-tRNA hydrolase of Salmonella agona (strain SL483).